The following is a 422-amino-acid chain: G2/mitotic-specific cyclin-A (422 aa).

The interval 1–29 (MSQPFALHHDGENQMQRRGKMNTRSNGLS) is disordered.

Belongs to the cyclin family. Cyclin AB subfamily.

Its function is as follows. Essential for the control of the cell cycle at the G2/M (mitosis) transition. Interacts with the CDC2 and CDK2 protein kinases to form MPF. G2/M cyclins accumulate steadily during G2 and are abruptly destroyed at mitosis. This Spisula solidissima (Atlantic surf-clam) protein is G2/mitotic-specific cyclin-A.